The following is a 602-amino-acid chain: 3-hydroxy-3-methylglutaryl-coenzyme A reductase 2 (602 aa).

The next 2 helical transmembrane spans lie at 44-67 and 95-115; these read ASDALPLPLYLTTNGLFFTMFFSV and AIVSLIASVIYLLGFFGIGFV. The interval 116–187 is linker; that stretch reads QTFVSRGNND…PLITSASSGE (72 aa). A glycan (N-linked (GlcNAc...) asparagine) is linked at asparagine 124. The interval 188–602 is catalytic; it reads DEEIIKSVVQ…STKDVTKASS (415 aa). The Charge relay system role is filled by glutamate 281. Asparagine 345 is a glycosylation site (N-linked (GlcNAc...) asparagine). Lysine 413 serves as the catalytic Charge relay system. Asparagine 458 carries N-linked (GlcNAc...) asparagine glycosylation. The active-site Charge relay system is the aspartate 489. Histidine 587 serves as the catalytic Proton donor. Asparagine 591 carries N-linked (GlcNAc...) asparagine glycosylation.

It belongs to the HMG-CoA reductase family.

Its subcellular location is the endoplasmic reticulum membrane. The catalysed reaction is (R)-mevalonate + 2 NADP(+) + CoA = (3S)-3-hydroxy-3-methylglutaryl-CoA + 2 NADPH + 2 H(+). The protein operates within metabolic intermediate biosynthesis; (R)-mevalonate biosynthesis; (R)-mevalonate from acetyl-CoA: step 3/3. Catalyzes the synthesis of mevalonate. The specific precursor of all isoprenoid compounds present in plants. The protein is 3-hydroxy-3-methylglutaryl-coenzyme A reductase 2 (HMG2) of Solanum lycopersicum (Tomato).